We begin with the raw amino-acid sequence, 295 residues long: MEDQASAQLLGPVEIRQLAEKLDVTPTKKLGQNFVHDPNTVRMIVSAADLNSDDHVIEVGPGLGSLTLALLDTAQKVTAVEIDPRLAQQLPLTVAERAGQFADRLNLIHKDALTVAPDDIDHPTALVANLPYNVSVPVLLHLLQIFPTIRRVLVMVQAEVADRLAADPGNKVYGVPSVKASFYGNVRRAGSIGKNVFWPAPKIESGLVRIDVFDPEHQPWPVTDDMRKAVFPLIDSAFAQRRKTLRAALSGHFGSGPAAEEALRTAGIDPILRGEKLDIADFVRLARVTAAQEQA.

S-adenosyl-L-methionine-binding residues include N33, V35, G60, E81, D111, and N129.

Belongs to the class I-like SAM-binding methyltransferase superfamily. rRNA adenine N(6)-methyltransferase family. RsmA subfamily.

The protein localises to the cytoplasm. The catalysed reaction is adenosine(1518)/adenosine(1519) in 16S rRNA + 4 S-adenosyl-L-methionine = N(6)-dimethyladenosine(1518)/N(6)-dimethyladenosine(1519) in 16S rRNA + 4 S-adenosyl-L-homocysteine + 4 H(+). In terms of biological role, specifically dimethylates two adjacent adenosines (A1518 and A1519) in the loop of a conserved hairpin near the 3'-end of 16S rRNA in the 30S particle. May play a critical role in biogenesis of 30S subunits. This chain is Ribosomal RNA small subunit methyltransferase A, found in Corynebacterium diphtheriae (strain ATCC 700971 / NCTC 13129 / Biotype gravis).